Reading from the N-terminus, the 488-residue chain is MSSAAMDTKHFLPLGGRTCADTLRCTTSWTAGYDFSSQVNSSSLSSSGLRGSMTAPLLHPSLGNSGLNNSLGSPTQLPSPLSSPINGMGPPFSVISPPLGPSMAIPSTPGLGYGTGSPQIHSPMNSVSSTEDIKPPPGINGILKVPMHPSGAMASFTKHICAICGDRSSGKHYGVYSCEGCKGFFKRTVRKDLTYTCRDSKDCMIDKRQRNRCQYCRYQKCLAMGMKREAVQEERQRGKERNENEVESSNSANEDMPVEKILEAEHAVEPKTETYTEANMGLAPNSPSDPVTNICQAADKQLFTLVEWAKRIPHFSELPLDDQVILLRAGWNELLIASFSHRSIAVKDGILLATGLHVHRNSAHSAGVGAIFDRVLTELVSKMRDMQMDKTELGCLRAIVLFNPDSKGLSNPLEVEALREKVYASLEAYCKQKYPEQPGRFAKLLLRLPALRSIGLKCLEHLFFFKLIGDTPIDTFLMEMLEAPHQMT.

The segment at 1-160 (MSSAAMDTKH…GAMASFTKHI (160 aa)) is modulating. Lys-134 participates in a covalent cross-link: Glycyl lysine isopeptide (Lys-Gly) (interchain with G-Cter in SUMO). The nuclear receptor DNA-binding region spans 158–233 (KHICAICGDR…MGMKREAVQE (76 aa)). Zn(2+)-binding residues include Cys-161, Cys-164, Cys-178, and Cys-181. The segment at 161–181 (CAICGDRSSGKHYGVYSCEGC) adopts an NR C4-type zinc-finger fold. A nuclear localization signal region spans residues 186–191 (KRTVRK). Positions 197, 203, 213, and 216 each coordinate Zn(2+). An NR C4-type zinc finger spans residues 197–216 (CRDSKDCMIDKRQRNRCQYC). Positions 227-250 (KREAVQEERQRGKERNENEVESSN) are hinge. The segment covering 232 to 244 (QEERQRGKERNEN) has biased composition (basic and acidic residues). The interval 232–256 (QEERQRGKERNENEVESSNSANEDM) is disordered. The 232-residue stretch at 253–484 (NEDMPVEKIL…TFLMEMLEAP (232 aa)) folds into the NR LBD domain. 2 residues coordinate 9-cis-retinoate: Arg-342 and Ala-353. All-trans-retinoate contacts are provided by Arg-342 and Ala-353. A required for nuclear export region spans residues 374-394 (RVLTELVSKMRDMQMDKTELG). The segment at 473–484 (IDTFLMEMLEAP) is AF-2.

It belongs to the nuclear hormone receptor family. NR2 subfamily. In terms of assembly, homodimer. Heterodimer; with a rar molecule. Binds DNA preferentially as a rar/rxr heterodimer. Interacts with coactivator ncoa3 and with senp6. Sumoylated on Lys-134; which negatively regulates transcriptional activity. Desumoylated specifically by SENP6.

The protein localises to the nucleus. Functionally, receptor for retinoic acid that acts as a transcription factor. Forms homo- or heterodimers with retinoic acid receptors (rars) and binds to target response elements in response to their ligands, all-trans or 9-cis retinoic acid, to regulate gene expression in various biological processes. The rar/rxr heterodimers bind to the retinoic acid response elements (RARE) composed of tandem 5'-AGGTCA-3' sites known as DR1-DR5 to regulate transcription. The high affinity ligand for rxrs is 9-cis retinoic acid. In the absence of ligand, the rar/rxr heterodimers associate with a multiprotein complex containing transcription corepressors that induce histone deacetylation, chromatin condensation and transcriptional suppression. On ligand binding, the corepressors dissociate from the receptors and coactivators are recruited leading to transcriptional activation. The polypeptide is Retinoic acid receptor RXR-alpha (rxra) (Xenopus laevis (African clawed frog)).